The sequence spans 279 residues: Movement protein (279 aa).

Positions 255–279 (SPPFAIGSPSASRNNSFRSQVVNGL) are disordered. The span at 263 to 279 (PSASRNNSFRSQVVNGL) shows a compositional bias: polar residues.

This sequence belongs to the cucumovirus movement protein family.

The protein resides in the host cell junction. It localises to the host plasmodesma. Functionally, transports viral genome to neighboring plant cells directly through plasmosdesmata, without any budding. The movement protein allows efficient cell to cell propagation, by bypassing the host cell wall barrier. Acts by forming a tubular structure at the host plasmodesmata, enlarging it enough to allow free passage of virion capsids. This Cucumis sativus (Cucumber) protein is Movement protein.